A 305-amino-acid chain; its full sequence is Ornithine carbamoyltransferase, anabolic (305 aa).

Residues 53–56, glutamine 80, arginine 104, and 131–134 each bind carbamoyl phosphate; these read STRT and HPCQ. Residues asparagine 162, aspartate 219, and 223-224 each bind L-ornithine; that span reads SM. Carbamoyl phosphate is bound by residues 259–260 and arginine 287; that span reads CL.

It belongs to the aspartate/ornithine carbamoyltransferase superfamily. OTCase family. As to quaternary structure, homotrimer.

It localises to the cytoplasm. The catalysed reaction is carbamoyl phosphate + L-ornithine = L-citrulline + phosphate + H(+). It participates in amino-acid biosynthesis; L-arginine biosynthesis; L-arginine from L-ornithine and carbamoyl phosphate: step 1/3. Reversibly catalyzes the transfer of the carbamoyl group from carbamoyl phosphate (CP) to the N(epsilon) atom of ornithine (ORN) to produce L-citrulline, which is a substrate for argininosuccinate synthetase (ArgG) involved in the final step in arginine biosynthesis. The sequence is that of Ornithine carbamoyltransferase, anabolic from Pseudomonas aeruginosa (strain ATCC 15692 / DSM 22644 / CIP 104116 / JCM 14847 / LMG 12228 / 1C / PRS 101 / PAO1).